The primary structure comprises 347 residues: Putative ORC1-type DNA replication protein 1 (347 aa).

ATP is bound by residues 34 to 38, Tyr-167, and Arg-179; that span reads TGKTV.

It belongs to the CDC6/cdc18 family.

Involved in regulation of DNA replication. Has no effect on MCM helicase activity, either stimulatory or inhibitory. Does not bind DNA. This Thermoplasma acidophilum (strain ATCC 25905 / DSM 1728 / JCM 9062 / NBRC 15155 / AMRC-C165) protein is Putative ORC1-type DNA replication protein 1 (cdc6-1).